We begin with the raw amino-acid sequence, 398 residues long: S-adenosylmethionine synthase (398 aa).

An ATP-binding site is contributed by Gly-136–Asp-141.

It belongs to the AdoMet synthase 2 family. Mg(2+) is required as a cofactor.

It carries out the reaction L-methionine + ATP + H2O = S-adenosyl-L-methionine + phosphate + diphosphate. Its pathway is amino-acid biosynthesis; S-adenosyl-L-methionine biosynthesis; S-adenosyl-L-methionine from L-methionine: step 1/1. Its function is as follows. Catalyzes the formation of S-adenosylmethionine from methionine and ATP. The protein is S-adenosylmethionine synthase of Methanosarcina barkeri (strain Fusaro / DSM 804).